The sequence spans 444 residues: C4-dicarboxylate transport protein (444 aa).

9 consecutive transmembrane segments (helical) span residues 15 to 35, 46 to 66, 78 to 98, 143 to 163, 199 to 219, 224 to 244, 291 to 311, 332 to 352, and 354 to 374; these read VIVA…FGVA, LIKM…IAGM, YALL…LIVV, IVGA…VIFG, PIGA…GSLV, LMIC…GGIA, VVGL…AIYL, ITLL…TGSG, and IVLA…LALI. Positions 422–444 are disordered; that stretch reads GIADTRPEDDLGVAEGPTPSNVK.

Belongs to the dicarboxylate/amino acid:cation symporter (DAACS) (TC 2.A.23) family.

It is found in the cell inner membrane. Functionally, responsible for the transport of dicarboxylates such as succinate, fumarate, and malate from the periplasm across the membrane. This chain is C4-dicarboxylate transport protein, found in Pseudomonas fluorescens (strain Pf0-1).